The sequence spans 73 residues: Toxin Td10 (73 aa).

Positions 1–7 (IGMVVEC) are cleaved as a signal peptide. The region spanning 8 to 70 (KDGYLMGPDG…VWERATNRCG (63 aa)) is the LCN-type CS-alpha/beta domain. 4 disulfide bridges follow: cysteine 18–cysteine 69, cysteine 22–cysteine 44, cysteine 30–cysteine 50, and cysteine 34–cysteine 52. Position 71 is a lysine amide (lysine 71).

This sequence belongs to the long (4 C-C) scorpion toxin superfamily. Sodium channel inhibitor family. Beta subfamily. Expressed by the venom gland.

It is found in the secreted. In terms of biological role, beta toxins bind voltage-independently at site-4 of sodium channels (Nav) and shift the voltage of activation toward more negative potentials thereby affecting sodium channel activation and promoting spontaneous and repetitive firing. This is Toxin Td10 from Tityus discrepans (Venezuelan scorpion).